A 222-amino-acid chain; its full sequence is Interleukin-12 subunit alpha (222 aa).

Positions 1–25 (MCPLRNLLLVATLVLLNHLDHLSLG) are cleaved as a signal peptide. Disulfide bonds link cysteine 40-cysteine 113, cysteine 67-cysteine 199, and cysteine 88-cysteine 126. Asparagine 42 and asparagine 96 each carry an N-linked (GlcNAc...) asparagine glycan.

The protein belongs to the IL-6 superfamily. In terms of assembly, heterodimer with IL12B; disulfide-linked. This heterodimer is known as interleukin IL-12. Heterodimer with EBI3/IL27B; not disulfide-linked. This heterodimer is known as interleukin IL-35. Interacts with NBR1; this interaction promotes IL-12 secretion.

It is found in the secreted. Functionally, heterodimerizes with IL12B to form the IL-12 cytokine or with EBI3/IL27B to form the IL-35 cytokine. IL-12 is primarily produced by professional antigen-presenting cells (APCs) such as B-cells and dendritic cells (DCs) as well as macrophages and granulocytes and regulates T-cell and natural killer-cell responses, induces the production of interferon-gamma (IFN-gamma), favors the differentiation of T-helper 1 (Th1) cells and is an important link between innate resistance and adaptive immunity. Mechanistically, exerts its biological effects through a receptor composed of IL12R1 and IL12R2 subunits. Binding to the receptor results in the rapid tyrosine phosphorylation of a number of cellular substrates including the JAK family kinases TYK2 and JAK2. In turn, recruited STAT4 gets phosphorylated and translocates to the nucleus where it regulates cytokine/growth factor responsive genes. As part of IL-35, plays essential roles in maintaining the immune homeostasis of the liver microenvironment and also functions as an immune-suppressive cytokine. Mediates biological events through unconventional receptors composed of IL12RB2 and gp130/IL6ST heterodimers or homodimers. Signaling requires the transcription factors STAT1 and STAT4, which form a unique heterodimer that binds to distinct DNA sites. In Sus scrofa (Pig), this protein is Interleukin-12 subunit alpha (IL12A).